A 303-amino-acid chain; its full sequence is Zinc transporter ZIP9 (303 aa).

Residues 7 to 27 (ISLLSLAMLVGCYVSGIIPLA) form a helical membrane-spanning segment. Asn29 is a glycosylation site (N-linked (GlcNAc...) asparagine). The next 5 helical transmembrane spans lie at 35–55 (LKLV…AVIV), 102–122 (AYIG…DQIG), 142–162 (ITTT…LGAA), 172–192 (LIVF…LVSF), and 206–226 (HLLV…LGLS). Asn237 carries an N-linked (GlcNAc...) asparagine glycan. 2 helical membrane passes run 240 to 260 (GVAM…HVLP) and 282 to 302 (LEVC…IGHQ).

The protein belongs to the ZIP transporter (TC 2.A.5) family.

Its subcellular location is the golgi apparatus. It is found in the trans-Golgi network membrane. It localises to the cell membrane. The protein resides in the cytoplasm. The protein localises to the perinuclear region. Its subcellular location is the mitochondrion. It is found in the nucleus. It catalyses the reaction Zn(2+)(in) = Zn(2+)(out). In terms of biological role, transports zinc ions across cell and organelle membranes into the cytoplasm and regulates intracellular zinc homeostasis. Participates in the zinc ions efflux out of the secretory compartments. Also functions as a membrane androgen receptor that mediates, through a G protein, the non-classical androgen signaling pathway, characterized by the activation of MAPK3/MAPK1 (Erk1/2) and transcription factors CREB1 or ATF1. Moreover, has dual functions as a membrane-bound androgen receptor and as an androgen-dependent zinc transporter both of which are mediated through an inhibitory G protein (Gi) that mediates both MAP kinase and zinc signaling leading to the androgen-dependent apoptotic process. This Xenopus tropicalis (Western clawed frog) protein is Zinc transporter ZIP9.